Consider the following 95-residue polypeptide: Large ribosomal subunit protein bL28 (95 aa).

This sequence belongs to the bacterial ribosomal protein bL28 family.

The polypeptide is Large ribosomal subunit protein bL28 (Dinoroseobacter shibae (strain DSM 16493 / NCIMB 14021 / DFL 12)).